The chain runs to 689 residues: Glycine--tRNA ligase beta subunit (689 aa).

It belongs to the class-II aminoacyl-tRNA synthetase family. In terms of assembly, tetramer of two alpha and two beta subunits.

The protein localises to the cytoplasm. It carries out the reaction tRNA(Gly) + glycine + ATP = glycyl-tRNA(Gly) + AMP + diphosphate. The sequence is that of Glycine--tRNA ligase beta subunit from Escherichia coli (strain K12 / MC4100 / BW2952).